The following is a 255-amino-acid chain: Flagellar brake protein YcgR (255 aa).

The PilZ domain occupies 122–240 (QRRTYFRINT…ERDLQQVIFE (119 aa)).

The protein belongs to the YcgR family. In terms of assembly, monomer. Interacts with the flagellar basal bodies.

The protein localises to the bacterial flagellum basal body. Functionally, acts as a flagellar brake, regulating swimming and swarming in a bis-(3'-5') cyclic diguanylic acid (c-di-GMP)-dependent manner. Binds 1 c-di-GMP dimer per subunit. Increasing levels of c-di-GMP lead to decreased motility. This is Flagellar brake protein YcgR from Pectobacterium carotovorum subsp. carotovorum (strain PC1).